Consider the following 189-residue polypeptide: MNYNIRGENIEVTPALKDHVERKIGKLERYFDHSVDADVNVNLKFYNDKESKVEVTIPMTDLALRSEVHNEDMYNAIDLATNKLERQIRKHKTKVNRKFREQGSPKYLLANGLGSDTDIAVQDDIEEEESLDIVRQKRFNLKPMDSEEAILQMNMLGHNFFVFTNAETNLTNVVYRRNDGKYGLIEPTE.

It belongs to the HPF/YfiA ribosome-associated protein family. Long HPF subfamily. In terms of assembly, interacts with 100S ribosomes. Not associated with 70S ribosome monomers, about 1 monomer per ribosome.

The protein localises to the cytoplasm. Required for dimerization of active 70S ribosomes into 100S ribosomes in stationary phase; 100S ribosomes are translationally inactive and sometimes present during exponential growth. May not be the only factor implicated. Might negatively regulate the activity of the sigma-54 factor (SigL). The polypeptide is Ribosome hibernation promotion factor (yvyD) (Bacillus subtilis (strain 168)).